The primary structure comprises 553 residues: MSQAIEIKVPDIGDYDAVPVIEVHVKPGDSINAEDALVTLESDKATMDVPSPQAGVVKDVRIKVGDNVSEGSVLVMLEAANEPAAAPAPAAAAPAPAAAAPAPAPAPAAAPAAAPAAGGGGTIEVKVPDIGDYDAVPVIEVHVKAGDTINAEDAVVTLESDKATMDVPSPQGGVVKEVKVKVGDNVAEGTLLLILEGAAASAAPAAAAAAPAPAASAPAPAPAPAAAAPAPAAAPAAAPAAAGVTGKAAHASPSVRKFARELGVDVSRVPGTGPKGRITQEDVQGYVKGVMSGQAAAPAQAAAAGAGGGELGLLPWPKFDFTRFGEVESKALSRIKKISGANLHRNWVMIPHVTNHDEADITELEAFRLQLNKENEKSGIKVTMLAFMIKATVAALKKFPNFNASLDGDNLVLKKYFNIGFAADTPNGLVVPVIKDADKKGVLEISQEMSELAKLARDGKLKPDQMQGGCFSISSLGGLGGTYFTPIINAPEVAIMGVCKSYQKPVWDGKQFAPRLTLPLSLSWDHRVIDGAEAARFNTYFGQLLADFRRILL.

One can recognise a Lipoyl-binding 1 domain in the interval 4–78 (AIEIKVPDIG…SEGSVLVMLE (75 aa)). Residue Lys-44 is modified to N6-lipoyllysine. Residues 97–118 (AAAAPAPAPAPAAAPAAAPAAG) form a disordered region. The Lipoyl-binding 2 domain maps to 122–196 (TIEVKVPDIG…AEGTLLLILE (75 aa)). An N6-lipoyllysine modification is found at Lys-162. One can recognise a Peripheral subunit-binding (PSBD) domain in the interval 250 to 287 (HASPSVRKFARELGVDVSRVPGTGPKGRITQEDVQGYV). Residue His-526 is part of the active site.

The protein belongs to the 2-oxoacid dehydrogenase family. As to quaternary structure, forms a 24-polypeptide structural core with octahedral symmetry. Requires (R)-lipoate as cofactor.

The catalysed reaction is N(6)-[(R)-dihydrolipoyl]-L-lysyl-[protein] + acetyl-CoA = N(6)-[(R)-S(8)-acetyldihydrolipoyl]-L-lysyl-[protein] + CoA. Functionally, the pyruvate dehydrogenase complex catalyzes the overall conversion of pyruvate to acetyl-CoA and CO(2). It contains multiple copies of three enzymatic components: pyruvate dehydrogenase (E1), dihydrolipoamide acetyltransferase (E2) and lipoamide dehydrogenase (E3). The chain is Dihydrolipoyllysine-residue acetyltransferase component of pyruvate dehydrogenase complex (pdhB) from Cupriavidus necator (strain ATCC 17699 / DSM 428 / KCTC 22496 / NCIMB 10442 / H16 / Stanier 337) (Ralstonia eutropha).